The chain runs to 156 residues: Snaclec alboaggregin-B subunit alpha (156 aa).

Residues 1 to 23 form the signal peptide; that stretch reads MGRFIFVSFGLLVVFLSLSGTGA. In terms of domain architecture, C-type lectin spans 24-151; sequence DCPSDWSSFK…CEQKHIFMCK (128 aa). Intrachain disulfides connect Cys-25–Cys-36, Cys-53–Cys-150, and Cys-125–Cys-142.

This sequence belongs to the snaclec family. In terms of assembly, heterodimer of subunits alpha and beta; disulfide-linked. In terms of tissue distribution, expressed by the venom gland.

Its subcellular location is the secreted. In terms of biological role, weakly agglutinates platelets at high doses by binding to GPIbalpha (GP1BA). This chain is Snaclec alboaggregin-B subunit alpha, found in Trimeresurus albolabris (White-lipped pit viper).